We begin with the raw amino-acid sequence, 37 residues long: Omega/M-ectatotoxin-Et1a subunit A (37 aa).

Cys12 and Cys34 are joined by a disulfide.

Belongs to the ectatomin family. Ectatomin-Et subfamily. In terms of assembly, heterodimer of an A and a B chain; disulfide-linked. As to expression, expressed by the venom gland.

Its subcellular location is the secreted. The protein resides in the target cell membrane. Algogenic for animals, human and insects. At high concentrations (0.5-1 uM), it acts as a pore-forming protein that forms nonselective cation channels both in cell and artificial membranes. It is weakly selective for cation over anions channel conductance is identical in both directions. At lower concentrations (1-10 nM), this heterodimer inhibits cardiac L-type calcium currents in isolated rat cardiac ventricular myocytes. The sequence is that of Omega/M-ectatotoxin-Et1a subunit A from Ectatomma tuberculatum (Selva ant).